Here is a 101-residue protein sequence, read N- to C-terminus: Small integral membrane protein 14 (101 aa).

Residues 71 to 81 (SDRRTADDAAI) show a composition bias toward basic and acidic residues. The disordered stretch occupies residues 71 to 101 (SDRRTADDAAIEKPTGSSDDNTPPPPPPSAM). Residues 92 to 101 (TPPPPPPSAM) are compositionally biased toward pro residues.

The polypeptide is Small integral membrane protein 14 (Caenorhabditis elegans).